Here is a 450-residue protein sequence, read N- to C-terminus: ATP-dependent protease ATPase subunit HslU (450 aa).

ATP contacts are provided by residues Val-29, 71–76, Asp-261, Glu-328, and Arg-400; that span reads GVGKTE.

The protein belongs to the ClpX chaperone family. HslU subfamily. A double ring-shaped homohexamer of HslV is capped on each side by a ring-shaped HslU homohexamer. The assembly of the HslU/HslV complex is dependent on binding of ATP.

Its subcellular location is the cytoplasm. In terms of biological role, ATPase subunit of a proteasome-like degradation complex; this subunit has chaperone activity. The binding of ATP and its subsequent hydrolysis by HslU are essential for unfolding of protein substrates subsequently hydrolyzed by HslV. HslU recognizes the N-terminal part of its protein substrates and unfolds these before they are guided to HslV for hydrolysis. In Rickettsia felis (strain ATCC VR-1525 / URRWXCal2) (Rickettsia azadi), this protein is ATP-dependent protease ATPase subunit HslU.